We begin with the raw amino-acid sequence, 385 residues long: WD repeat-containing protein 74 (385 aa).

WD repeat units lie at residues 40-80, 83-122, 128-168, 179-220, 224-266, and 267-306; these read RREE…FQGQ, CPGG…TSSD, RVGP…EPVF, DLRV…RRPV, TYGE…GCLK, and GLAG…GLEH. Ser214 bears the Phosphoserine mark. The residue at position 311 (Lys311) is an N6-methyllysine. The tract at residues 320-385 is required for nucleolar and nuclear location; the sequence is SGRDNWEDEP…KKKRPGSTSP (66 aa). Disordered stretches follow at residues 323-345 and 360-385; these read DNWE…DTET and LSGL…STSP. Ser361 carries the post-translational modification Phosphoserine. Over residues 372 to 385 the composition is skewed to basic residues; that stretch reads TRRRKKKRPGSTSP.

Isoform 1 interacts (through WDR repeats) with NVL; the interaction is independent of RNA or pre-60S ribosome particles. Isoform 2 does not interact with NVL. Interacts with MTREX; the interaction dissociation in a late stage of rRNA synthesis is required for appropriate maturation of pre-60S particles and depends on the ATPase activity of NVL.

It localises to the nucleus. Its subcellular location is the nucleolus. Regulatory protein of the MTREX-exosome complex involved in the synthesis of the 60S ribosomal subunit. Participates in an early cleavage of the pre-rRNA processing pathway in cooperation with NVL. Required for blastocyst formation, is necessary for RNA transcription, processing and/or stability during preimplantation development. The protein is WD repeat-containing protein 74 (WDR74) of Homo sapiens (Human).